Here is a 109-residue protein sequence, read N- to C-terminus: Putative pterin-4-alpha-carbinolamine dehydratase (109 aa).

The protein belongs to the pterin-4-alpha-carbinolamine dehydratase family.

The enzyme catalyses (4aS,6R)-4a-hydroxy-L-erythro-5,6,7,8-tetrahydrobiopterin = (6R)-L-erythro-6,7-dihydrobiopterin + H2O. The protein is Putative pterin-4-alpha-carbinolamine dehydratase of Vibrio cholerae serotype O1 (strain ATCC 39315 / El Tor Inaba N16961).